A 147-amino-acid chain; its full sequence is Myoglobin (147 aa).

Ala-2 carries the N-acetylalanine modification. In terms of domain architecture, Globin spans 2 to 141 (ADFDAVLKCW…IIADLEANYK (140 aa)). Position 60 (His-60) interacts with nitrite. An O2-binding site is contributed by His-60. Heme b is bound at residue His-89.

The protein belongs to the globin family. In terms of assembly, monomeric.

The protein resides in the cytoplasm. It localises to the sarcoplasm. The catalysed reaction is Fe(III)-heme b-[protein] + nitric oxide + H2O = Fe(II)-heme b-[protein] + nitrite + 2 H(+). It carries out the reaction H2O2 + AH2 = A + 2 H2O. Monomeric heme protein which primary function is to store oxygen and facilitate its diffusion within muscle tissues. Reversibly binds oxygen through a pentacoordinated heme iron and enables its timely and efficient release as needed during periods of heightened demand. Depending on the oxidative conditions of tissues and cells, and in addition to its ability to bind oxygen, it also has a nitrite reductase activity whereby it regulates the production of bioactive nitric oxide. Under stress conditions, like hypoxia and anoxia, it also protects cells against reactive oxygen species thanks to its pseudoperoxidase activity. The protein is Myoglobin (mb) of Thunnus albacares (Yellowfin tuna).